The chain runs to 454 residues: MTLPLHVVILAAGEGKRMRSSLPKVLQPLAGQPMLAHVIATARQLQPAAIHIVYGHGGDQVQAAFADQGDLQWAEQCEQLGTGHAVQQAMPAIPDAATVLVLYGDVPLIRSESLLQLLHAPGRMAVLVAELANPTGYGRILRDAEGKVAAIVEQKDANDEQRRIRTINTGILTAESTALRRWLAGLSKDNAQGEFYLTDVFASAAADFTPADMVHVADPQHVEGANDPWQLAQLERAWQLRAARTLCLQGVRMADPARVEQRGSVQVGRDVQLDIDVILEGNVTLGDDVVIGPFVRLRDVTLGAGTHVRAHSDLEGVVTEGAVQIGPFARLRPGTVLADGVHIGNFVETKKVTMGVGSKANHLTYLGDAVIGSKVNIGAGTITCNYDGVNKSQTTIGDGAFVGSNSALVAPIEIGANSTIGAGSVITSDAPAGQLSVTRARQTVIEGWKRPTKK.

The pyrophosphorylase stretch occupies residues 1 to 228 (MTLPLHVVIL…PQHVEGANDP (228 aa)). UDP-N-acetyl-alpha-D-glucosamine-binding positions include 10–13 (LAAG), K24, Q76, 81–82 (GT), 103–105 (YGD), G138, E153, N168, and N226. D105 contacts Mg(2+). N226 contacts Mg(2+). Residues 229–249 (WQLAQLERAWQLRAARTLCLQ) form a linker region. The interval 250-454 (GVRMADPARV…IEGWKRPTKK (205 aa)) is N-acetyltransferase. UDP-N-acetyl-alpha-D-glucosamine is bound by residues R332 and K350. The active-site Proton acceptor is H362. Residues Y365 and N376 each contribute to the UDP-N-acetyl-alpha-D-glucosamine site. Residues A379, 385 to 386 (NY), S404, A422, and R439 contribute to the acetyl-CoA site.

In the N-terminal section; belongs to the N-acetylglucosamine-1-phosphate uridyltransferase family. The protein in the C-terminal section; belongs to the transferase hexapeptide repeat family. Homotrimer. Requires Mg(2+) as cofactor.

It localises to the cytoplasm. The catalysed reaction is alpha-D-glucosamine 1-phosphate + acetyl-CoA = N-acetyl-alpha-D-glucosamine 1-phosphate + CoA + H(+). The enzyme catalyses N-acetyl-alpha-D-glucosamine 1-phosphate + UTP + H(+) = UDP-N-acetyl-alpha-D-glucosamine + diphosphate. It participates in nucleotide-sugar biosynthesis; UDP-N-acetyl-alpha-D-glucosamine biosynthesis; N-acetyl-alpha-D-glucosamine 1-phosphate from alpha-D-glucosamine 6-phosphate (route II): step 2/2. The protein operates within nucleotide-sugar biosynthesis; UDP-N-acetyl-alpha-D-glucosamine biosynthesis; UDP-N-acetyl-alpha-D-glucosamine from N-acetyl-alpha-D-glucosamine 1-phosphate: step 1/1. Its pathway is bacterial outer membrane biogenesis; LPS lipid A biosynthesis. In terms of biological role, catalyzes the last two sequential reactions in the de novo biosynthetic pathway for UDP-N-acetylglucosamine (UDP-GlcNAc). The C-terminal domain catalyzes the transfer of acetyl group from acetyl coenzyme A to glucosamine-1-phosphate (GlcN-1-P) to produce N-acetylglucosamine-1-phosphate (GlcNAc-1-P), which is converted into UDP-GlcNAc by the transfer of uridine 5-monophosphate (from uridine 5-triphosphate), a reaction catalyzed by the N-terminal domain. The protein is Bifunctional protein GlmU of Xanthomonas euvesicatoria pv. vesicatoria (strain 85-10) (Xanthomonas campestris pv. vesicatoria).